Here is a 178-residue protein sequence, read N- to C-terminus: GTP-dependent dephospho-CoA kinase (178 aa).

Asp55, Val57, Asp74, Lys76, and Glu127 together coordinate GTP.

It belongs to the GTP-dependent DPCK family.

It catalyses the reaction 3'-dephospho-CoA + GTP = GDP + CoA + H(+). It functions in the pathway cofactor biosynthesis; coenzyme A biosynthesis. Its function is as follows. Catalyzes the GTP-dependent phosphorylation of the 3'-hydroxyl group of dephosphocoenzyme A to form coenzyme A (CoA). This chain is GTP-dependent dephospho-CoA kinase, found in Saccharolobus islandicus (strain Y.N.15.51 / Yellowstone #2) (Sulfolobus islandicus).